The following is a 342-amino-acid chain: tRNA N6-adenosine threonylcarbamoyltransferase (342 aa).

Fe cation is bound by residues histidine 119 and histidine 123. Substrate contacts are provided by residues 142-146 (VVSGG), aspartate 175, glycine 188, and asparagine 282. Aspartate 310 contacts Fe cation.

It belongs to the KAE1 / TsaD family. The cofactor is Fe(2+).

Its subcellular location is the cytoplasm. The catalysed reaction is L-threonylcarbamoyladenylate + adenosine(37) in tRNA = N(6)-L-threonylcarbamoyladenosine(37) in tRNA + AMP + H(+). Its function is as follows. Required for the formation of a threonylcarbamoyl group on adenosine at position 37 (t(6)A37) in tRNAs that read codons beginning with adenine. Is involved in the transfer of the threonylcarbamoyl moiety of threonylcarbamoyl-AMP (TC-AMP) to the N6 group of A37, together with TsaE and TsaB. TsaD likely plays a direct catalytic role in this reaction. In Moorella thermoacetica (strain ATCC 39073 / JCM 9320), this protein is tRNA N6-adenosine threonylcarbamoyltransferase.